The sequence spans 475 residues: ATP synthase subunit beta 1 (475 aa).

Residue 152–159 participates in ATP binding; the sequence is GGAGVGKT.

It belongs to the ATPase alpha/beta chains family. As to quaternary structure, F-type ATPases have 2 components, CF(1) - the catalytic core - and CF(0) - the membrane proton channel. CF(1) has five subunits: alpha(3), beta(3), gamma(1), delta(1), epsilon(1). CF(0) has four main subunits: a(1), b(1), b'(1) and c(9-12).

The protein localises to the cell inner membrane. It carries out the reaction ATP + H2O + 4 H(+)(in) = ADP + phosphate + 5 H(+)(out). Functionally, produces ATP from ADP in the presence of a proton gradient across the membrane. The catalytic sites are hosted primarily by the beta subunits. The sequence is that of ATP synthase subunit beta 1 from Cereibacter sphaeroides (strain ATCC 17029 / ATH 2.4.9) (Rhodobacter sphaeroides).